Consider the following 162-residue polypeptide: NADPH-dependent 7-cyano-7-deazaguanine reductase (162 aa).

The active-site Thioimide intermediate is Cys-53. Asp-60 functions as the Proton donor in the catalytic mechanism. Substrate-binding positions include 75-77 and 94-95; these read VES and HE.

It belongs to the GTP cyclohydrolase I family. QueF type 1 subfamily.

The protein resides in the cytoplasm. It catalyses the reaction 7-aminomethyl-7-carbaguanine + 2 NADP(+) = 7-cyano-7-deazaguanine + 2 NADPH + 3 H(+). It functions in the pathway tRNA modification; tRNA-queuosine biosynthesis. In terms of biological role, catalyzes the NADPH-dependent reduction of 7-cyano-7-deazaguanine (preQ0) to 7-aminomethyl-7-deazaguanine (preQ1). This Exiguobacterium sp. (strain ATCC BAA-1283 / AT1b) protein is NADPH-dependent 7-cyano-7-deazaguanine reductase.